Reading from the N-terminus, the 163-residue chain is Nucleotide-binding protein YajQ (163 aa).

It belongs to the YajQ family.

In terms of biological role, nucleotide-binding protein. The chain is Nucleotide-binding protein YajQ from Shigella dysenteriae serotype 1 (strain Sd197).